A 599-amino-acid chain; its full sequence is Pentatricopeptide repeat-containing protein At3g62540, mitochondrial (599 aa).

The transit peptide at 1 to 99 (MAAAPWLYLS…RGFSSGSSNV (99 aa)) directs the protein to the mitochondrion. 10 PPR repeats span residues 194–228 (ASRT…GLLT), 230–262 (ETFT…KFKI), 263–293 (GVET…LKER), 297–331 (NMMT…GLKP), 332–366 (DIVA…GPCP), 367–401 (NVRS…GLQP), 402–436 (DAAV…GHPP), 437–471 (DGKT…EIEP), 472–506 (SIHT…GICP), and 507–541 (DDNS…GMKT).

This sequence belongs to the PPR family. P subfamily.

It localises to the mitochondrion. The protein is Pentatricopeptide repeat-containing protein At3g62540, mitochondrial of Arabidopsis thaliana (Mouse-ear cress).